A 37-amino-acid chain; its full sequence is Large ribosomal subunit protein bL36c (37 aa).

The protein belongs to the bacterial ribosomal protein bL36 family.

The protein localises to the plastid. Its subcellular location is the chloroplast. This is Large ribosomal subunit protein bL36c from Angiopteris evecta (Mule's foot fern).